We begin with the raw amino-acid sequence, 334 residues long: Heat-inducible transcription repressor HrcA (334 aa).

This sequence belongs to the HrcA family.

Negative regulator of class I heat shock genes (grpE-dnaK-dnaJ and groELS operons). Prevents heat-shock induction of these operons. The sequence is that of Heat-inducible transcription repressor HrcA from Paracidovorax citrulli (strain AAC00-1) (Acidovorax citrulli).